Reading from the N-terminus, the 70-residue chain is Putative defensin-like protein 73 (70 aa).

Residues 1–29 (MNCKIEFMSFLVMTSIVILFLFVSGKVEA) form the signal peptide. Cystine bridges form between cysteine 33/cysteine 68, cysteine 37/cysteine 57, cysteine 43/cysteine 66, and cysteine 47/cysteine 67.

This sequence belongs to the DEFL family.

The protein localises to the secreted. The polypeptide is Putative defensin-like protein 73 (LCR44) (Arabidopsis thaliana (Mouse-ear cress)).